A 309-amino-acid chain; its full sequence is Probable (S)-ureidoglycine aminohydrolase (309 aa).

A signal peptide spans 1 to 22; it reads MMLPRLLLLVVASALPLASVAA. Mn(2+) contacts are provided by glutamate 245, histidine 247, histidine 251, and glutamine 285. Glutamate 245 is a binding site for substrate. Substrate contacts are provided by glutamine 285, tyrosine 297, and lysine 301.

This sequence belongs to the UGHY family. Homooctamer. Requires Mn(2+) as cofactor.

It is found in the endoplasmic reticulum. The catalysed reaction is (S)-2-ureidoglycine + H2O = (S)-ureidoglycolate + NH4(+). Its function is as follows. Involved in the catabolism of purine nucleotides. The sequential activity of AAH, UGLYAH and UAH allows a complete purine breakdown without the intermediate generation of urea. The protein is Probable (S)-ureidoglycine aminohydrolase (UGLYAH) of Oryza sativa subsp. japonica (Rice).